Consider the following 346-residue polypeptide: MLQEKELVKQKAKELLLDLLSIYTPSKSEANATKFFEKISKDLNLKLEILPDSNSFILGEGDILLASHVDTVYGYIEPKIENELIYGRGAVDAKGPLISMIIATWLLNEKGIKVRVSGLADEESTSIGAKELIAKNYNFKYIIVGEPSNATDIVVEYRGSIQLDIMCEGTPEHSSSAKNNLIVDISKKIIEVYKQPENYDKPSIVPTIIRAGESYNVTPAKLYLHLDIRYAINNKREDLIKEITDKFPECNLKIVDETPPVKVSINNPVVKSLARALLKQNIKPRLVKKAGTSDMNILQRITTNIATYGPGNSMLEHTTQEKISLDEIYIGVKTYMLAIEELWQKI.

His-68 lines the Zn(2+) pocket. Asp-70 is an active-site residue. Asp-92 is a Zn(2+) binding site. Glu-122 (proton acceptor) is an active-site residue. Zn(2+) contacts are provided by Glu-123, Glu-146, and His-317.

This sequence belongs to the peptidase M20A family. LysK subfamily. Zn(2+) serves as cofactor. Co(2+) is required as a cofactor.

It is found in the cytoplasm. It carries out the reaction [amino-group carrier protein]-C-terminal-gamma-(L-lysyl)-L-glutamate + H2O = [amino-group carrier protein]-C-terminal-L-glutamate + L-lysine. The catalysed reaction is [amino-group carrier protein]-C-terminal-gamma-(L-ornithyl)-L-glutamate + H2O = [amino-group carrier protein]-C-terminal-L-glutamate + L-ornithine. Its pathway is amino-acid biosynthesis; L-lysine biosynthesis via AAA pathway; L-lysine from L-alpha-aminoadipate (Thermus route): step 5/5. It participates in amino-acid biosynthesis; L-arginine biosynthesis. Catalyzes the release of L-lysine from [LysW]-gamma-L-lysine and the release of L-ornithine from [LysW]-L-ornithine. In Saccharolobus solfataricus (strain ATCC 35092 / DSM 1617 / JCM 11322 / P2) (Sulfolobus solfataricus), this protein is [LysW]-lysine/[LysW]-ornithine hydrolase.